Consider the following 507-residue polypeptide: MATLRVDEINKILRERIEQYNRKVGIENIGRVVQVGDGIARIIGLGEIMSGELVEFAEGTRGIALNLESKNVGIVLMGDGLMIQEGSFVKATGRIAQIPVSEAYLGRVINALAKPIDGRGEIVASESRLIESPAPGIISRRSVYEPLQTGLIAIDSMIPIGRGQRELIIGDRQTGKTAVATDTILNQKGQDVICVYVAIGQRASSVAQVVTTFHEEGAMEYTIVVAEMADSPATLQYLAPYTGAALAEYFMYRERHTLIIYDDLSKQAQAYRQMSLLLRRPPGREAYPGDVFYLHSRLLERAAKLNSLLGEGSMTALPIVETQSGDVSAYIPTNVISITDGQIFLSADLFNAGIRPAINVGISVSRVGSAAQIKAMKQVAGKSKLELAQFAELQAFAQFASALDKTSQNQLARGRRLRELLKQSQSNPLPVEEQVATIYTGTRGYLDSLEIEQVKKFLDELRKHLKDTKPQFQEIISSSKTFTEQAETLLKEAIQEQLERFSLQEQT.

Gly170–Thr177 serves as a coordination point for ATP.

This sequence belongs to the ATPase alpha/beta chains family. In terms of assembly, F-type ATPases have 2 components, CF(1) - the catalytic core - and CF(0) - the membrane proton channel. CF(1) has five subunits: alpha(3), beta(3), gamma(1), delta(1), epsilon(1). CF(0) has four main subunits: a, b, b' and c.

Its subcellular location is the plastid. It is found in the chloroplast thylakoid membrane. It catalyses the reaction ATP + H2O + 4 H(+)(in) = ADP + phosphate + 5 H(+)(out). Functionally, produces ATP from ADP in the presence of a proton gradient across the membrane. The alpha chain is a regulatory subunit. The protein is ATP synthase subunit alpha, chloroplastic of Sorghum bicolor (Sorghum).